The chain runs to 564 residues: Dihydroxy-acid dehydratase (564 aa).

Cysteine 51 is a [2Fe-2S] cluster binding site. Position 83 (aspartate 83) interacts with Mg(2+). Residue cysteine 124 coordinates [2Fe-2S] cluster. Positions 125 and 126 each coordinate Mg(2+). Lysine 126 is subject to N6-carboxylysine. Cysteine 196 lines the [2Fe-2S] cluster pocket. Glutamate 448 is a binding site for Mg(2+). Catalysis depends on serine 474, which acts as the Proton acceptor.

This sequence belongs to the IlvD/Edd family. Homodimer. [2Fe-2S] cluster is required as a cofactor. Mg(2+) serves as cofactor.

The enzyme catalyses (2R)-2,3-dihydroxy-3-methylbutanoate = 3-methyl-2-oxobutanoate + H2O. It carries out the reaction (2R,3R)-2,3-dihydroxy-3-methylpentanoate = (S)-3-methyl-2-oxopentanoate + H2O. The protein operates within amino-acid biosynthesis; L-isoleucine biosynthesis; L-isoleucine from 2-oxobutanoate: step 3/4. It functions in the pathway amino-acid biosynthesis; L-valine biosynthesis; L-valine from pyruvate: step 3/4. Functions in the biosynthesis of branched-chain amino acids. Catalyzes the dehydration of (2R,3R)-2,3-dihydroxy-3-methylpentanoate (2,3-dihydroxy-3-methylvalerate) into 2-oxo-3-methylpentanoate (2-oxo-3-methylvalerate) and of (2R)-2,3-dihydroxy-3-methylbutanoate (2,3-dihydroxyisovalerate) into 2-oxo-3-methylbutanoate (2-oxoisovalerate), the penultimate precursor to L-isoleucine and L-valine, respectively. This chain is Dihydroxy-acid dehydratase, found in Pyrobaculum calidifontis (strain DSM 21063 / JCM 11548 / VA1).